A 497-amino-acid chain; its full sequence is Paired box protein Pax-2-A (497 aa).

The paired DNA-binding region spans 16–142 (GHGGVNQLGG…SSINRIIRTK (127 aa)). The tract at residues 19–75 (GVNQLGGVFVNGRPLPDVVRQRIVELAHQGVRPCDISRQLRVSHGCVSKILGRYYET) is PAI subdomain. An RED subdomain region spans residues 94–142 (KVVDKIAEYKRQNPTMFAWEIRDRLLAEGICDNDTVPSVSSINRIIRTK). The segment at 143–224 (VQQPFHPTPD…GDSQSSVESL (82 aa)) is disordered. Low complexity predominate over residues 166–178 (VPSTASPPVSSAS).

As to expression, expression becomes spatially localized at mid-gastrula stages and is confined to the nervous system (midbrain, hindbrain, spinal cord), sensory organs (optic vesicle and stalk, otic vesicle), visceral arches, developing excretory system (pronephros, pronephric duct, rectal diverticulum, proctodaeum) and thyroid gland. Splicing does not appear to be tissue-specific and tissues displayed the same spectrum of splice variants.

It localises to the nucleus. Probable transcription factor. Involved in kidney development, acting synergistically with lhx1/lim-1 in pronephric morphogenesis during the tailbud stages. This Xenopus laevis (African clawed frog) protein is Paired box protein Pax-2-A (pax2-a).